The following is a 260-amino-acid chain: Transforming acid coiled-coil-containing protein 1 (260 aa).

The tract at residues 1–43 (MSLNTTFTKEDGTEVVIPFNGSQNGHPENEEPEVEEAAEPSSS) is disordered. Positions 108-249 (ASSEELEKAL…CDQLLNDVDV (142 aa)) form a coiled coil.

The protein belongs to the TACC family. In terms of assembly, interacts with zyg-9 to form a heterodimer. Interacts with zyg-8 to form a heterodimer. Interacts with efa-6 (via N-terminus). Expressed in touch neurons.

The protein resides in the cytoplasm. The protein localises to the cytoskeleton. It is found in the spindle pole. Its subcellular location is the microtubule organizing center. It localises to the centrosome. The protein resides in the chromosome. The protein localises to the centromere. It is found in the kinetochore. Its subcellular location is the cell projection. It localises to the axon. The protein resides in the perikaryon. Its function is as follows. Involved in microtubule formation, polymerization and assembly, regulating microtubule nucleation and length. Plays a role in pronuclear migration and mitotic and meiotic spindle elongation during early embryogenesis. In complex with zyg-9, functions during the early stages of embryonic development to regulate microtubule assembly throughout the cell cycle. Specifically, the complex is required for the formation and growth of astral microtubules and spindle microtubules during mitotic spindle assembly. At anaphase, the complex is required for mitotic spindle positioning in one-cell stage embryos. The complex acts in a partially redundant manner with the tac-1/zyg-8 complex to regulate microtubule assembly and processes during interphase, mitosis and meiosis in embryos. Plays a role in injury-induced axonal regrowth, regeneration and microtubule stability in PLM neurons and this may be downstream of efa-6. This Caenorhabditis elegans protein is Transforming acid coiled-coil-containing protein 1.